The following is a 940-amino-acid chain: Protein translocase subunit SecA (940 aa).

ATP is bound by residues glutamine 85, 103 to 107 (GEGKT), and aspartate 505. Residues 851-940 (PVQDGAERPS…KGGGGRRRKK (90 aa)) form a disordered region. Residues 855–865 (GAERPSLEKEG) are compositionally biased toward basic and acidic residues. Basic residues predominate over residues 928–940 (RRRKGGGGRRRKK).

This sequence belongs to the SecA family. In terms of assembly, monomer and homodimer. Part of the essential Sec protein translocation apparatus which comprises SecA, SecYEG and auxiliary proteins SecDF. Other proteins may also be involved.

It is found in the cell membrane. The protein resides in the cytoplasm. It catalyses the reaction ATP + H2O + cellular proteinSide 1 = ADP + phosphate + cellular proteinSide 2.. Part of the Sec protein translocase complex. Interacts with the SecYEG preprotein conducting channel. Has a central role in coupling the hydrolysis of ATP to the transfer of proteins into and across the cell membrane, serving as an ATP-driven molecular motor driving the stepwise translocation of polypeptide chains across the membrane. This Streptomyces griseus protein is Protein translocase subunit SecA.